The sequence spans 103 residues: UPF0145 protein CYA_2258 (103 aa).

The protein belongs to the UPF0145 family.

The polypeptide is UPF0145 protein CYA_2258 (Synechococcus sp. (strain JA-3-3Ab) (Cyanobacteria bacterium Yellowstone A-Prime)).